Reading from the N-terminus, the 337-residue chain is MLHSASVIFLSLSVLAAVGVWGPFVRDGGFDAMDAVVARHPSTGIPGLQHYPEFDRGLMSIVAFNLSAVNSIAYCFMMQFLANVAVIPVILCTEDSSAAPGSWVRYSTIWGLLSQLGTSAVIYPLYAMSFIRQSSREPSQTRQPMSDMALILNMAMGYALPAAITLNVLHSSLNMQIWGILAFTVYPICMKLMARIIKVFTGFRKFPTRSRHQSIPTLRYAVAGGVALQGHLWYLGTELGIFKGHTPSLSAEKMDSEGGARLVLRFLQVDYAITFLAMLLLAWHELIYHRILPAWRALGGLIIGWILVGPGATLAAAWYLRSRFIMAPGKRKKRYGD.

Residues 5-25 traverse the membrane as a helical segment; sequence ASVIFLSLSVLAAVGVWGPFV. Asparagine 65 is a glycosylation site (N-linked (GlcNAc...) asparagine). 7 helical membrane-spanning segments follow: residues 72-92, 111-131, 149-169, 177-197, 222-242, 267-287, and 298-318; these read IAYCFMMQFLANVAVIPVILC, GLLSQLGTSAVIYPLYAMSFI, ALILNMAMGYALPAAITLNVL, IWGILAFTVYPICMKLMARII, VAGGVALQGHLWYLGTELGIF, LQVDYAITFLAMLLLAWHELI, and LGGLIIGWILVGPGATLAAAW.

It belongs to the membrane-bound ascI terpene cyclase family.

The protein localises to the membrane. It participates in antifungal biosynthesis. Cyclase; part of the gene cluster that mediates the biosynthesis of the tetrahydropyranyl antifungal agent lanomycin that acts as an inhibitor of CYP51 and blocks the ergosterol biosynthesis. The biosynthesis probably begins with the formation of an hexaketide, followed by methionine mediated alkylation of C-2 and C-6, and methylation of the reduced C-3 oxygen, pyran forming reductive ring closure, oxygenation of C-4, beta-keto reduction, enoyl reduction and dehydration of the remaining oxygens, and finally, acylation with glycine to complete the biosynthesis. The polypeptide is Terpene cyclase (Pyrenophora dematioidea (Helminthosporium dematioideum)).